Here is a 68-residue protein sequence, read N- to C-terminus: DNA gyrase inhibitor YacG (68 aa).

Positions 14, 17, 29, and 33 each coordinate Zn(2+).

Belongs to the DNA gyrase inhibitor YacG family. Interacts with GyrB. Zn(2+) serves as cofactor.

In terms of biological role, inhibits all the catalytic activities of DNA gyrase by preventing its interaction with DNA. Acts by binding directly to the C-terminal domain of GyrB, which probably disrupts DNA binding by the gyrase. The chain is DNA gyrase inhibitor YacG from Azorhizobium caulinodans (strain ATCC 43989 / DSM 5975 / JCM 20966 / LMG 6465 / NBRC 14845 / NCIMB 13405 / ORS 571).